Consider the following 530-residue polypeptide: Alkyl hydroperoxide reductase subunit F (530 aa).

214-229 (DVLVVGGGPAGSAAAV) contributes to the FAD binding site. A disulfide bridge connects residues Cys-344 and Cys-347. 356-370 (RVAVIGGGNSGVEAA) is a binding site for NAD(+). 477–487 (TDVPGVFAAGD) serves as a coordination point for FAD.

Belongs to the class-II pyridine nucleotide-disulfide oxidoreductase family. As to quaternary structure, homodimer. It depends on FAD as a cofactor.

Serves to protect the cell against DNA damage by alkyl hydroperoxides. It can use either NADH or NADPH as electron donor for direct reduction of redox dyes or of alkyl hydroperoxides when combined with the AhpC protein. This Xanthomonas campestris pv. phaseoli protein is Alkyl hydroperoxide reductase subunit F (ahpF).